Reading from the N-terminus, the 963-residue chain is Isoleucine--tRNA ligase (963 aa).

The short motif at 66 to 76 (PYANGDIHIGH) is the 'HIGH' region element. Glu596 is an L-isoleucyl-5'-AMP binding site. The 'KMSKS' region signature appears at 637 to 641 (KMSKS). Position 640 (Lys640) interacts with ATP. Zn(2+) is bound by residues Cys926, Cys929, Cys946, and Cys949.

Belongs to the class-I aminoacyl-tRNA synthetase family. IleS type 1 subfamily. Monomer. Zn(2+) is required as a cofactor.

The protein resides in the cytoplasm. The catalysed reaction is tRNA(Ile) + L-isoleucine + ATP = L-isoleucyl-tRNA(Ile) + AMP + diphosphate. Catalyzes the attachment of isoleucine to tRNA(Ile). As IleRS can inadvertently accommodate and process structurally similar amino acids such as valine, to avoid such errors it has two additional distinct tRNA(Ile)-dependent editing activities. One activity is designated as 'pretransfer' editing and involves the hydrolysis of activated Val-AMP. The other activity is designated 'posttransfer' editing and involves deacylation of mischarged Val-tRNA(Ile). In Cupriavidus pinatubonensis (strain JMP 134 / LMG 1197) (Cupriavidus necator (strain JMP 134)), this protein is Isoleucine--tRNA ligase.